Consider the following 558-residue polypeptide: Delta-1-pyrroline-5-carboxylate dehydrogenase, mitochondrial (558 aa).

NAD(+) contacts are provided by residues Ser198, Lys223, and 276–280 (GSTGV). Residue Glu306 is the Proton acceptor of the active site. Cys340 functions as the Nucleophile in the catalytic mechanism. Glu438 serves as a coordination point for NAD(+).

This sequence belongs to the aldehyde dehydrogenase family.

It localises to the mitochondrion matrix. It carries out the reaction L-glutamate 5-semialdehyde + NAD(+) + H2O = L-glutamate + NADH + 2 H(+). It functions in the pathway amino-acid degradation; L-proline degradation into L-glutamate; L-glutamate from L-proline: step 2/2. Its function is as follows. Irreversible conversion of delta-1-pyrroline-5-carboxylate (P5C), derived either from proline or ornithine, to glutamate. This is a necessary step in the pathway interconnecting the urea and tricarboxylic acid cycles. This is Delta-1-pyrroline-5-carboxylate dehydrogenase, mitochondrial from Dictyostelium discoideum (Social amoeba).